Reading from the N-terminus, the 271-residue chain is Mannosyl-3-phosphoglycerate phosphatase (271 aa).

Asp-13 serves as the catalytic Nucleophile. Mg(2+)-binding residues include Asp-13, Asp-15, and Asp-214.

The protein belongs to the HAD-like hydrolase superfamily. MPGP family. Requires Mg(2+) as cofactor.

The protein resides in the cytoplasm. The enzyme catalyses 2-O-(alpha-D-mannosyl)-3-phosphoglycerate + H2O = (2R)-2-O-(alpha-D-mannosyl)-glycerate + phosphate. The chain is Mannosyl-3-phosphoglycerate phosphatase from Escherichia coli O81 (strain ED1a).